Consider the following 843-residue polypeptide: Protein P (843 aa).

The segment at 1–177 is terminal protein domain (TP); that stretch reads MPLSYQHFRR…FCGSPYSWEQ (177 aa). Residues 178-346 form a spacer region; it reads ELQHGSTSLN…YCLSHIINLL (169 aa). The tract at residues 249–301 is disordered; that stretch reads TPTRWPSGVEPSGTGHSDNLATRSTSRFHQSEVRKETNPSLSTSKGHTSTGHA. 2 stretches are compositionally biased toward polar residues: residues 262–276 and 286–299; these read TGHS…TSRF and NPSL…TSTG. The segment at 347-690 is polymerase/reverse transcriptase domain (RT); sequence EDWGPCYEHG…YMNLYPVARQ (344 aa). The 244-residue stretch at 357-600 folds into the Reverse transcriptase domain; it reads EHHIRTPRTP…YSLHFMGYII (244 aa). Mg(2+) is bound by residues Asp-429, Asp-551, and Asp-552.

Belongs to the hepadnaviridae P protein family.

The enzyme catalyses DNA(n) + a 2'-deoxyribonucleoside 5'-triphosphate = DNA(n+1) + diphosphate. It catalyses the reaction Endonucleolytic cleavage to 5'-phosphomonoester.. Activated by host HSP70 and HSP40 in vitro to be able to bind the epsilon loop of the pgRNA. Because deletion of the RNase H region renders the protein partly chaperone-independent, the chaperones may be needed indirectly to relieve occlusion of the RNA-binding site by this domain. Inhibited by several reverse-transcriptase inhibitors: Lamivudine, Adefovir and Entecavir. Multifunctional enzyme that converts the viral RNA genome into dsDNA in viral cytoplasmic capsids. This enzyme displays a DNA polymerase activity that can copy either DNA or RNA templates, and a ribonuclease H (RNase H) activity that cleaves the RNA strand of RNA-DNA heteroduplexes in a partially processive 3'- to 5'-endonucleasic mode. Neo-synthesized pregenomic RNA (pgRNA) are encapsidated together with the P protein, and reverse-transcribed inside the nucleocapsid. Initiation of reverse-transcription occurs first by binding the epsilon loop on the pgRNA genome, and is initiated by protein priming, thereby the 5'-end of (-)DNA is covalently linked to P protein. Partial (+)DNA is synthesized from the (-)DNA template and generates the relaxed circular DNA (RC-DNA) genome. After budding and infection, the RC-DNA migrates in the nucleus, and is converted into a plasmid-like covalently closed circular DNA (cccDNA). The activity of P protein does not seem to be necessary for cccDNA generation, and is presumably released from (+)DNA by host nuclear DNA repair machinery. In Homo sapiens (Human), this protein is Protein P.